The following is a 162-amino-acid chain: Ribosome maturation factor RimP (162 aa).

Belongs to the RimP family.

The protein resides in the cytoplasm. Its function is as follows. Required for maturation of 30S ribosomal subunits. This is Ribosome maturation factor RimP from Beutenbergia cavernae (strain ATCC BAA-8 / DSM 12333 / CCUG 43141 / JCM 11478 / NBRC 16432 / NCIMB 13614 / HKI 0122).